The following is a 438-amino-acid chain: MKTQSLIDCIEMTDSYKRYGKVKRVIGLMIESKGPASSIGDLCLIYAKGQSGKVIKAEVVGFQEENILLMPYLEAASIAPGSIVEATGESLRVKVGTGLIGQVIDAFGEPLDGKLLPKGLSPVSTEQSPPNPMKRPPIREKMGVGVRSIDSLLTVGKGQRIGIFAGSGVGKSTLMGMIAKQTEADLNVIALVGERGREVREFIEKDLGKEGLKRSIVVVATSDQPALMRLKAAYTATAIAEYFRDKGQNVMFMMDSVTRVAMAQREIGLAAGEPPTTKGYTPSVFAILPRLLERTGANEHGTITAFYTVLVDGDDMNEPIADTVRGILDGHIVLDRALANKGQFPAVNVLKSISRVMSNISTKQHLDAANKFRELLSTYQNSEDLINIGAYKRGSSREIDEAIQFYPQLIQFLKQGTDEPALLEESIAALTSLTGNEE.

Residues Gly119–Arg139 are disordered. Ala165–Ser172 contacts ATP.

Belongs to the ATPase alpha/beta chains family.

The protein localises to the cytoplasm. The enzyme catalyses ATP + H2O + 4 H(+)(in) = ADP + phosphate + 5 H(+)(out). Probable catalytic subunit of a protein translocase for flagellum-specific export, or a proton translocase involved in local circuits at the flagellum. This Bacillus subtilis (strain 168) protein is Flagellum-specific ATP synthase (fliI).